A 1845-amino-acid polypeptide reads, in one-letter code: Proteasome adapter and scaffold protein ECM29 (1845 aa).

At alanine 2 the chain carries N-acetylalanine. HEAT repeat units follow at residues 28-65 (TDEQ…LVHL), 107-144 (YPRL…LIPT), 162-205 (NLAE…QGSS), 326-362 (RDPV…YDGL), 387-426 (PEIK…VGKL), 429-466 (RMPH…LSMM), 469-507 (AYST…ASTV), 683-720 (YPEK…YSVV), 721-759 (VSTV…LGFT), 783-820 (TLPD…LGEI), 829-868 (PSEG…LGYF), 870-907 (VGDG…ITSA), 931-969 (AGAK…LLSL), 975-1012 (THKE…LGLV), 1013-1050 (YELG…VVFQ), 1112-1149 (AGEQ…WNAL), 1152-1189 (DKSM…LNDL), 1194-1231 (PLDD…LKTL), 1243-1281 (KGAA…LVKI), 1285-1323 (AGAM…TEQE), 1348-1386 (LQYL…IVSL), 1390-1427 (CPQD…MGHL), 1517-1554 (SFGG…MASI), 1558-1595 (TSSL…IACV), 1605-1642 (KSVP…AADI), 1646-1683 (TKED…ENEK), and 1779-1822 (TYSS…LATM). The span at 193–207 (QSRQNSSSAQGSSSN) shows a compositional bias: low complexity. Residues 193–217 (QSRQNSSSAQGSSSNSGGGSGIPQP) are disordered. Serine 830 carries the phosphoserine modification. Threonine 836 is subject to Phosphothreonine. A Glycyl lysine isopeptide (Lys-Gly) (interchain with G-Cter in SUMO1) cross-link involves residue lysine 1039.

It belongs to the ECM29 family. In terms of assembly, non-stoichiometric component of the proteasome; associates with the 26S proteasome. Interacts (via N-terminus) with VPS11, VPS26A, VPS36, RAB11FIP4 and RABEP1. Interacts (via C-terminus) with DCTN1, DCTN2, KIF5B, MYH7, MYH10, MYO10 and ARF6.

The protein localises to the endoplasmic reticulum. It is found in the endoplasmic reticulum-Golgi intermediate compartment. The protein resides in the endosome. It localises to the cytoplasm. Its subcellular location is the cytoskeleton. The protein localises to the microtubule organizing center. It is found in the centrosome. The protein resides in the nucleus. It localises to the multivesicular body. Its subcellular location is the cytoplasmic vesicle. Functionally, adapter/scaffolding protein that binds to the 26S proteasome, motor proteins and other compartment specific proteins. May couple the proteasome to different compartments including endosome, endoplasmic reticulum and centrosome. May play a role in ERAD and other enhanced proteolysis. Promotes proteasome dissociation under oxidative stress. In Homo sapiens (Human), this protein is Proteasome adapter and scaffold protein ECM29.